A 100-amino-acid chain; its full sequence is Large ribosomal subunit protein bL21 (100 aa).

The protein belongs to the bacterial ribosomal protein bL21 family. Part of the 50S ribosomal subunit. Contacts protein L20.

This protein binds to 23S rRNA in the presence of protein L20. This Wolbachia pipientis subsp. Culex pipiens (strain wPip) protein is Large ribosomal subunit protein bL21.